The chain runs to 319 residues: Acetyl-coenzyme A carboxylase carboxyl transferase subunit beta (319 aa).

Residues 24–293 form the CoA carboxyltransferase N-terminal domain; that stretch reads LWIKCPDTGQ…MIEQEPEPSA (270 aa). A disordered region spans residues 282 to 319; that stretch reads PEMIEQEPEPSAPVPPDEPDEPAATQEAPPAAPAAPPA.

It belongs to the AccD/PCCB family. In terms of assembly, acetyl-CoA carboxylase is a heterohexamer composed of biotin carboxyl carrier protein (AccB), biotin carboxylase (AccC) and two subunits each of ACCase subunit alpha (AccA) and ACCase subunit beta (AccD).

The protein resides in the cytoplasm. It catalyses the reaction N(6)-carboxybiotinyl-L-lysyl-[protein] + acetyl-CoA = N(6)-biotinyl-L-lysyl-[protein] + malonyl-CoA. It functions in the pathway lipid metabolism; malonyl-CoA biosynthesis; malonyl-CoA from acetyl-CoA: step 1/1. Functionally, component of the acetyl coenzyme A carboxylase (ACC) complex. Biotin carboxylase (BC) catalyzes the carboxylation of biotin on its carrier protein (BCCP) and then the CO(2) group is transferred by the transcarboxylase to acetyl-CoA to form malonyl-CoA. The sequence is that of Acetyl-coenzyme A carboxylase carboxyl transferase subunit beta from Nitrobacter winogradskyi (strain ATCC 25391 / DSM 10237 / CIP 104748 / NCIMB 11846 / Nb-255).